Consider the following 491-residue polypeptide: Cyclin-B1-5 (491 aa).

Residues 275 to 347 (DMYSFYKEVE…VKAVPKRELQ (73 aa)) enclose the Cyclin N-terminal domain.

It belongs to the cyclin family. Cyclin AB subfamily. In terms of tissue distribution, expressed in roots, stems and flowers.

The protein is Cyclin-B1-5 (CYCB1-5) of Arabidopsis thaliana (Mouse-ear cress).